Here is a 239-residue protein sequence, read N- to C-terminus: Phosphothreonine lyase OspF (239 aa).

Histidine 104 serves as the catalytic Proton donor. The active-site Proton acceptor is lysine 134.

This sequence belongs to the phosphothreonine lyase family.

It localises to the secreted. Functionally, catalyzes the removal of the phosphate group from the phosphothreonine in the mitogen-activated protein kinases p38, phosphothreonine in the mitogen-activated protein kinases such as MAPK2/ERK2, MAPK3/ERK1, MAPK8 and MAPK14 in an irreversible reaction, thus preventing the downstream phosphorylation of histone H3. This epigenetic modification results in inhibition of the transcription of a specific subset of pro-inflammatory genes, and ultimately to a reduced immune response against the invading pathogen. The diminished immune response enhances the bacterium's ability to disseminate and multiply within the host. The sequence is that of Phosphothreonine lyase OspF (ospF) from Shigella boydii serotype 4 (strain Sb227).